A 417-amino-acid chain; its full sequence is Phosphoglycerate kinase (417 aa).

(2R)-3-phosphoglycerate-binding residues include Val-23, Asp-24, Phe-25, Asn-26, Gln-38, Arg-39, Ser-62, His-63, Gly-65, Arg-66, Leu-121, Arg-122, His-169, and Arg-170. Position 213 (Gly-213) interacts with ADP. Gly-213 is a CDP binding site. 2 residues coordinate AMP: Ala-214 and Lys-215. Ala-214 serves as a coordination point for ATP. Residue Ala-214 coordinates Mg(2+). Asp-218 provides a ligand contact to CDP. A Mg(2+)-binding site is contributed by Asp-218. Lys-219 is a binding site for AMP. Lys-219 serves as a coordination point for ATP. Residue Gly-237 coordinates ADP. Position 237 (Gly-237) interacts with CDP. Gly-238 and Gly-312 together coordinate AMP. 2 residues coordinate ATP: Gly-238 and Gly-312. CDP contacts are provided by Gly-337 and Phe-342. Residue Phe-342 participates in ADP binding. Glu-343 serves as a coordination point for AMP. Residues Glu-343, Asp-374, and Thr-375 each coordinate ATP. Mg(2+) is bound at residue Asp-374.

This sequence belongs to the phosphoglycerate kinase family. Monomer. The cofactor is Mg(2+).

It is found in the cytoplasm. It localises to the secreted. Its subcellular location is the cell wall. The protein resides in the mitochondrion. It carries out the reaction (2R)-3-phosphoglycerate + ATP = (2R)-3-phospho-glyceroyl phosphate + ADP. Its pathway is carbohydrate degradation; glycolysis; pyruvate from D-glyceraldehyde 3-phosphate: step 2/5. Catalyzes one of the two ATP producing reactions in the glycolytic pathway via the reversible conversion of 1,3-diphosphoglycerate to 3-phosphoglycerate. Both L- and D- forms of purine and pyrimidine nucleotides can be used as substrates, but the activity is much lower on pyrimidines. Negatively regulates the biosynthesis of acetyl-CoA from pyruvate in the mitochondrion. This Candida albicans (strain SC5314 / ATCC MYA-2876) (Yeast) protein is Phosphoglycerate kinase (PGK1).